Consider the following 480-residue polypeptide: Citrate synthase 1, peroxisomal (480 aa).

Catalysis depends on residues His321, His360, and Asp416.

The protein belongs to the citrate synthase family. As to expression, expressed only in siliques. Not expressed in flower, stem, cauline leaf, young leaf, mature leaf and senescent leaf.

The protein resides in the peroxisome. It catalyses the reaction oxaloacetate + acetyl-CoA + H2O = citrate + CoA + H(+). It functions in the pathway carbohydrate metabolism; tricarboxylic acid cycle; isocitrate from oxaloacetate: step 1/2. This Arabidopsis thaliana (Mouse-ear cress) protein is Citrate synthase 1, peroxisomal (CSY1).